Consider the following 173-residue polypeptide: MSLAGSRLLFSLVFLVGALASWAAFNLQTGGGLESCSLWSVQRLLLLALGGVNLLAVIQGPGRVGRAVYWGLNLLLGLLGVVTAGRHVLLQNIPSEQLLACLPDMSFMLRQLSWWQALKLTFMGTSDCAEVTWTLLDMSLPEWSLLFFVIMLIFSGYRLWRQLRGARKAVALP.

The Cytoplasmic portion of the chain corresponds to 1-9 (MSLAGSRLL). The helical transmembrane segment at 10–26 (FSLVFLVGALASWAAFN) threads the bilayer. Topologically, residues 27-44 (LQTGGGLESCSLWSVQRL) are periplasmic. Residues 45–61 (LLLALGGVNLLAVIQGP) form a helical membrane-spanning segment. Topologically, residues 62-67 (GRVGRA) are cytoplasmic. Residues 68–85 (VYWGLNLLLGLLGVVTAG) traverse the membrane as a helical segment. Topologically, residues 86–142 (RHVLLQNIPSEQLLACLPDMSFMLRQLSWWQALKLTFMGTSDCAEVTWTLLDMSLPE) are periplasmic. A disulfide bond links Cys-101 and Cys-128. A helical transmembrane segment spans residues 143 to 161 (WSLLFFVIMLIFSGYRLWR). The Cytoplasmic portion of the chain corresponds to 162–173 (QLRGARKAVALP).

It belongs to the DsbB family.

The protein resides in the cell inner membrane. Its function is as follows. Required for disulfide bond formation in some periplasmic proteins. Acts by oxidizing the DsbA protein. The protein is Disulfide bond formation protein B 2 of Pseudomonas fluorescens (strain ATCC BAA-477 / NRRL B-23932 / Pf-5).